A 488-amino-acid chain; its full sequence is Glutamate--tRNA ligase (488 aa).

The short motif at 8 to 18 (PSPTGPLHIGG) is the 'HIGH' region element. Cys-105, Cys-107, Cys-132, and His-134 together coordinate Zn(2+). The 'KMSKS' region motif lies at 249 to 253 (KMSKR). Lys-252 serves as a coordination point for ATP.

The protein belongs to the class-I aminoacyl-tRNA synthetase family. Glutamate--tRNA ligase type 1 subfamily. As to quaternary structure, monomer. Requires Zn(2+) as cofactor.

Its subcellular location is the cytoplasm. The enzyme catalyses tRNA(Glu) + L-glutamate + ATP = L-glutamyl-tRNA(Glu) + AMP + diphosphate. Its function is as follows. Catalyzes the attachment of glutamate to tRNA(Glu) in a two-step reaction: glutamate is first activated by ATP to form Glu-AMP and then transferred to the acceptor end of tRNA(Glu). This Desulfitobacterium hafniense (strain Y51) protein is Glutamate--tRNA ligase.